A 310-amino-acid polypeptide reads, in one-letter code: MAFPKMRLMYICLLVLGALCLYFSMYSLNPFKEQSFVYKKDGNFLKLPDTDCRQTPPFLVLLVTSSHKQLAERMAIRQTWGKERMVKGKQLKTFFLLGTTSSAAETKEVDQESQRHGDIIQKDFLDVYYNLTLKTMMGIEWVHRFCPQAAFVMKTDSDMFINVDYLTELLLKKNRTTRFFTGFLKLNEFPIRQPFSKWFVSKSEYPWDRYPPFCSGTGYVFSGDVASQVYNVSKSVPYIKLEDVFVGLCLERLNIRLEELHSQPTFFPGGLRFSVCLFRRIVACHFIKPRTLLDYWQALENSRGEDCPPV.

The Cytoplasmic portion of the chain corresponds to 1-7; that stretch reads MAFPKMR. A helical; Signal-anchor for type II membrane protein transmembrane segment spans residues 8–28; it reads LMYICLLVLGALCLYFSMYSL. The Lumenal segment spans residues 29–310; sequence NPFKEQSFVY…NSRGEDCPPV (282 aa). N-linked (GlcNAc...) asparagine glycans are attached at residues N130, N174, and N231.

Belongs to the glycosyltransferase 31 family. As to expression, expressed in stomach, jejunum, colon, pancreas, small intestine, testis and gastrointestinal and pancreatic cancer cell lines. Hardly detected in lung, liver, adrenal gland and peripheral blood leukocytes.

It localises to the golgi apparatus membrane. It catalyses the reaction a globoside Gb4Cer (d18:1(4E)) + UDP-alpha-D-galactose = a globoside GalGb4Cer (d18:1(4E)) + UDP + H(+). Its pathway is protein modification; protein glycosylation. Functionally, catalyzes the transfer of Gal to GlcNAc-based acceptors with a preference for the core3 O-linked glycan GlcNAc(beta1,3)GalNAc structure. Can use glycolipid LC3Cer as an efficient acceptor. The chain is Beta-1,3-galactosyltransferase 5 from Homo sapiens (Human).